A 329-amino-acid chain; its full sequence is (12E)-labda-8(17),12,14-triene synthase (329 aa).

Residues Asp90 and Glu95 each contribute to the Mg(2+) site. The DDXXXE motif signature appears at 90–95 (DDMHGE). Arg184 provides a ligand contact to substrate. Mg(2+) contacts are provided by Asn230 and Ser234. The NXXXSXXXE motif signature appears at 230 to 238 (NDLASYERE). Arg237 provides a ligand contact to substrate. Residue Glu238 coordinates Mg(2+). Residue 316 to 317 (RY) coordinates substrate.

This sequence belongs to the terpene synthase family. It depends on Mg(2+) as a cofactor.

It catalyses the reaction (+)-copalyl diphosphate = (12E)-labda-8(17),12,14-triene + diphosphate. Its function is as follows. Involved in the biosynthesis of the mercapturic acid derivative diterpene cyslabdan A, a potentiator of the beta-lactam antibiotic imipenem. Catalyzes the conversion of (+)-copalyl diphosphate to yield labda-8(17),12(E),14-triene (biformene). The chain is (12E)-labda-8(17),12,14-triene synthase from Streptomyces cyslabdanicus.